A 447-amino-acid chain; its full sequence is N-succinylarginine dihydrolase (447 aa).

Residues 19–28, Asn-110, and 137–138 each bind substrate; these read AGLSVGNKAS and HR. Glu-174 is an active-site residue. Substrate is bound at residue Arg-213. Residue His-249 is part of the active site. Residues Asp-251 and Asn-365 each coordinate substrate. Cys-371 functions as the Nucleophile in the catalytic mechanism.

It belongs to the succinylarginine dihydrolase family. As to quaternary structure, homodimer.

The catalysed reaction is N(2)-succinyl-L-arginine + 2 H2O + 2 H(+) = N(2)-succinyl-L-ornithine + 2 NH4(+) + CO2. It participates in amino-acid degradation; L-arginine degradation via AST pathway; L-glutamate and succinate from L-arginine: step 2/5. Functionally, catalyzes the hydrolysis of N(2)-succinylarginine into N(2)-succinylornithine, ammonia and CO(2). The polypeptide is N-succinylarginine dihydrolase (Photorhabdus laumondii subsp. laumondii (strain DSM 15139 / CIP 105565 / TT01) (Photorhabdus luminescens subsp. laumondii)).